The sequence spans 21 residues: Cupiennin-6d (21 aa).

At Ser-21 the chain carries Serine amide.

In terms of tissue distribution, expressed by the venom gland.

The protein resides in the secreted. This Cupiennius salei (American wandering spider) protein is Cupiennin-6d.